The sequence spans 427 residues: Cyclic 2,3-diphosphoglycerate synthetase (427 aa).

The protein belongs to the cyclic 2,3-diphosphoglycerate synthetase family.

Its subcellular location is the cytoplasm. The enzyme catalyses (2R)-2,3-bisphosphoglycerate + ATP + H(+) = cyclic (2R)-2,3-bisphosphoglycerate + ADP + phosphate. In terms of biological role, catalyzes the formation of cyclic 2,3-diphosphoglycerate (cDPG) by formation of an intramolecular phosphoanhydride bond at the expense of ATP. This chain is Cyclic 2,3-diphosphoglycerate synthetase, found in Pyrococcus abyssi (strain GE5 / Orsay).